The sequence spans 182 residues: Coiled-coil domain-containing protein 32 (182 aa).

The span at 1–10 shows a compositional bias: basic and acidic residues; it reads MMIDDFETHA. Disordered stretches follow at residues 1 to 61 and 153 to 182; these read MMID…FSPW and PTQNSETPASSSQTDKPCVEEEEECPSPEK. Residues 153–167 show a composition bias toward polar residues; sequence PTQNSETPASSSQTD. A compositionally biased stretch (acidic residues) spans 172 to 182; the sequence is EEEEECPSPEK.

In terms of assembly, associates with adaptor protein complex 2 (AP-2).

It localises to the membrane. The protein localises to the coated pit. Functionally, regulates clathrin-mediated endocytsois of cargos such as transferrin probably through the association and modulation of adaptor protein complex 2 (AP-2). Has a role in ciliogenesis and is required for proper cephalic and left/right axis development. In Danio rerio (Zebrafish), this protein is Coiled-coil domain-containing protein 32.